The chain runs to 289 residues: HTH-type transcriptional regulator CatR (289 aa).

The HTH lysR-type domain maps to 1 to 57 (MELRHLRYFKVLAETLNFTRAAELLHIAQPPLSRQISQLEDQLGTLLVVRERPLRLT). Positions 18–37 (FTRAAELLHIAQPPLSRQIS) form a DNA-binding region, H-T-H motif.

Belongs to the LysR transcriptional regulatory family.

It localises to the cytoplasm. Its function is as follows. Positive regulator of the catBC operon that degrades catechol to acetyl-CoA. CatR binds in trans to the catR-catBC promoter-control region in the presence or absence of inducer but only activates the catBC operon in the presence of the inducer, cis-cis-muconate. The protein is HTH-type transcriptional regulator CatR (catR) of Pseudomonas putida (Arthrobacter siderocapsulatus).